Reading from the N-terminus, the 512-residue chain is Maturase K (512 aa).

Belongs to the intron maturase 2 family. MatK subfamily.

The protein localises to the plastid. Its subcellular location is the chloroplast. Functionally, usually encoded in the trnK tRNA gene intron. Probably assists in splicing its own and other chloroplast group II introns. The polypeptide is Maturase K (Lilium longiflorum (Trumpet lily)).